Reading from the N-terminus, the 293-residue chain is 4-diphosphocytidyl-2-C-methyl-D-erythritol kinase (293 aa).

Lys16 is an active-site residue. 99-109 (PMGAGLGGGSS) serves as a coordination point for ATP. The active site involves Asp141.

It belongs to the GHMP kinase family. IspE subfamily.

The catalysed reaction is 4-CDP-2-C-methyl-D-erythritol + ATP = 4-CDP-2-C-methyl-D-erythritol 2-phosphate + ADP + H(+). The protein operates within isoprenoid biosynthesis; isopentenyl diphosphate biosynthesis via DXP pathway; isopentenyl diphosphate from 1-deoxy-D-xylulose 5-phosphate: step 3/6. In terms of biological role, catalyzes the phosphorylation of the position 2 hydroxy group of 4-diphosphocytidyl-2C-methyl-D-erythritol. The polypeptide is 4-diphosphocytidyl-2-C-methyl-D-erythritol kinase (Burkholderia multivorans (strain ATCC 17616 / 249)).